The primary structure comprises 961 residues: Retinoblastoma-like protein homolog lin-35 (961 aa).

Disordered stretches follow at residues 1–43 and 55–129; these read MPKR…PPAK and GGVQ…TPPP. Residues 68-81 are compositionally biased toward polar residues; the sequence is ELTQMTIKQETEGN. Residues 107–119 show a composition bias toward acidic residues; that stretch reads GEDDDYEEDDADS. Ser-714 is modified (phosphoserine; by CDK4). Thr-719 carries the post-translational modification Phosphothreonine; by CDK4.

It belongs to the retinoblastoma protein (RB) family. Component of the DRM complex, at least composed of lin-9, lin-35, lin-37, lin-52, lin-53, lin-54, dpl-1 and efl-1. Interacts with lin-53. Interacts (via C-terminus) with dpl-1 (via C-terminus) and efl-1 (via C-terminus). Interacts (via C-terminus) with lin-8. Phosphorylated by the cyclin dependent kinase cdk-4. Phosphorylation inhibits the transcriptional repressor activity of lin-35 and allows for progression through the G1 phase of the cell cycle during postembryonic development.

It localises to the nucleus. Key regulator of cell division which acts as a transcriptional repressor and negatively regulates cell cycle progression in its active unphosphorylated form, but allows cell cycle progression when phosphorylated. When unphosphorylated and in its active form, interacts with E2F transcription factors such as efl-1 to repress their transcriptional activity and negatively regulate the progression through the G1 phase of the cell cycle during postembryonic development. May furthermore act with cell cycle regulator cki-1 to negatively regulate cell cycle progression. Acts redundantly with lin-53, fzr-1 and lin-23 to control cell cycle progression by regulating the expression of G1 phase cyclins. In particular, negatively regulates the expression of the cyclin E homolog cye-1, which is essential for the G1/S phase transition. Regulates cell division in the intestinal lineage, repressing the expression of genes such as cdc-25.2, which are required for intestinal cells to transition from the karyokinesis cell cycle (also known as nuclear division) to endoreplication, a specific growth pathway in the intestinal epithelium required for feeding and gut development in growing larvae during the L1 stage molt. Its role as a transcriptional repressor in the regulation of intestinal cell division during postembryonic development is most likely in complex with an E2F cell cycle regulatory transcription factor efl-1 and its binding partner the synthetic multivulva class B protein dpl-1. Synthetic multivulva (synMuv) class B protein. SynMuv proteins are required to repress the induction of vulval development by Ras signaling and probably act by forming the multiprotein DRM complex that represses transcription. Together with synMuv class B protein lin-53, and redundantly with synMuv class A protein lin-15A, represses transcription to control vulval development, most likely through antagonization of the Ras-signaling pathway in the major hypodermal syncytium hyp7. Acts redundantly with the transcriptional corepressor spr-1 and the zinc finger protein zfp-2 to play a role in vulval morphogenesis, promote germline proliferation and somatic gonad development. Acts redundantly with ubc-18 in the regulation of pharyngeal morphogenesis during embryonic development by negatively regulating the expression of proteins such as sup-35. Functions with the SWI/SNF complex and proteins such as pha-1 to regulate larval development. Functions redundantly with xnp-1 to regulate somatic gonad development. Acts redundantly with slr-2 to regulate the expression of intestinal genes required for nutrient utilization. Regulates transcription in response to starvation. Furthermore, in response to starvation, promotes germ cell programmed cell death by negatively regulating the expression of the anti-apoptotic protein ced-9. Conversely, in conjunction with mcd-1, efl-1 and the synthetic multivulva class B proteins dpl-1, lin-37 and lin-52, may also regulate transcription to promote programmed cell death independently of ced-1, ced-8 and ced-9 cell death pathways. Directly involved in heterochromatin formation by maintaining overall chromatin structure and, in particular, that of constitutive heterochromatin by stabilizing histone methylation. In particular, negatively regulates the expression of mes-4, a histone methyltransferase that controls the expression of germline specific genes. May play a role in double strand break formation during meiosis. May suppress sensitivity to RNAi. May play a role in the response to endoplasmic reticulum (ER) stress. This chain is Retinoblastoma-like protein homolog lin-35, found in Caenorhabditis elegans.